Here is a 360-residue protein sequence, read N- to C-terminus: DNA replication and repair protein RecF (360 aa).

Residue 30 to 37 coordinates ATP; sequence GHNGSGKT.

The protein belongs to the RecF family.

The protein localises to the cytoplasm. Its function is as follows. The RecF protein is involved in DNA metabolism; it is required for DNA replication and normal SOS inducibility. RecF binds preferentially to single-stranded, linear DNA. It also seems to bind ATP. This chain is DNA replication and repair protein RecF, found in Shewanella pealeana (strain ATCC 700345 / ANG-SQ1).